The chain runs to 266 residues: F-actin-capping protein subunit beta (266 aa).

This sequence belongs to the F-actin-capping protein beta subunit family. As to quaternary structure, component of the F-actin capping complex, composed of a heterodimer of an alpha and a beta subunit.

The protein resides in the cytoplasm. The protein localises to the cytoskeleton. Its subcellular location is the actin patch. Functionally, F-actin-capping proteins bind in a Ca(2+)-independent manner to the fast growing ends of actin filaments (barbed end) thereby blocking the exchange of subunits at these ends. Unlike other capping proteins (such as gelsolin and severin), these proteins do not sever actin filaments. The chain is F-actin-capping protein subunit beta (cap2) from Aspergillus oryzae (strain ATCC 42149 / RIB 40) (Yellow koji mold).